We begin with the raw amino-acid sequence, 83 residues long: ATP synthase subunit c (83 aa).

The next 2 helical transmembrane spans lie at 10–30 and 52–72; these read IAVALLIGMGALGTAIGFGLL and MFIVAGLLDAVTMIGVGIALF.

It belongs to the ATPase C chain family. In terms of assembly, F-type ATPases have 2 components, F(1) - the catalytic core - and F(0) - the membrane proton channel. F(1) has five subunits: alpha(3), beta(3), gamma(1), delta(1), epsilon(1). F(0) has three main subunits: a(1), b(2) and c(10-14). The alpha and beta chains form an alternating ring which encloses part of the gamma chain. F(1) is attached to F(0) by a central stalk formed by the gamma and epsilon chains, while a peripheral stalk is formed by the delta and b chains.

The protein localises to the cell inner membrane. In terms of biological role, f(1)F(0) ATP synthase produces ATP from ADP in the presence of a proton or sodium gradient. F-type ATPases consist of two structural domains, F(1) containing the extramembraneous catalytic core and F(0) containing the membrane proton channel, linked together by a central stalk and a peripheral stalk. During catalysis, ATP synthesis in the catalytic domain of F(1) is coupled via a rotary mechanism of the central stalk subunits to proton translocation. Key component of the F(0) channel; it plays a direct role in translocation across the membrane. A homomeric c-ring of between 10-14 subunits forms the central stalk rotor element with the F(1) delta and epsilon subunits. This is ATP synthase subunit c from Shewanella baltica (strain OS223).